Consider the following 231-residue polypeptide: Two-component response regulator ORR1 (231 aa).

Residues 9-135 (RVLLVDDSPV…DVQRLRNCSP (127 aa)) enclose the Response regulatory domain. At Asp68 the chain carries 4-aspartylphosphate.

Belongs to the ARR family. Type-A subfamily. Two-component system major event consists of a His-to-Asp phosphorelay between a sensor histidine kinase (HK) and a response regulator (RR). In plants, the His-to-Asp phosphorelay involves an additional intermediate named Histidine-containing phosphotransfer protein (HPt). This multistep phosphorelay consists of a His-Asp-His-Asp sequential transfer of a phosphate group between first a His and an Asp of the HK protein, followed by the transfer to a conserved His of the HPt protein and finally the transfer to an Asp in the receiver domain of the RR protein. As to expression, expressed in roots, leaf blades, leaf sheaths, shoot apex, flowers and panicles.

Functionally, functions as a response regulator involved in His-to-Asp phosphorelay signal transduction system. Phosphorylation of the Asp residue in the receiver domain activates the ability of the protein to promote the transcription of target genes. Type-A response regulators seem to act as negative regulators of the cytokinin signaling. Involved in adventitious (crown) root initiation under the regulation of CRL5. This chain is Two-component response regulator ORR1, found in Oryza sativa subsp. japonica (Rice).